The primary structure comprises 47 residues: uncharacterized protein (47 aa).

The interval 24–47 (FGPNPIEPPTDIAPDPDSTKTWLI) is disordered.

This is an uncharacterized protein from Mycobacterium tuberculosis (strain ATCC 25618 / H37Rv).